Here is a 239-residue protein sequence, read N- to C-terminus: Uridylate kinase (239 aa).

12–15 (KLSG) contributes to the ATP binding site. The interval 20 to 25 (GEKGFG) is involved in allosteric activation by GTP. Residue G54 coordinates UMP. ATP-binding residues include G55 and R59. UMP-binding positions include D72 and 133–140 (TGNPFFST). Residues Y166 and D169 each coordinate ATP.

It belongs to the UMP kinase family. Homohexamer.

The protein resides in the cytoplasm. The catalysed reaction is UMP + ATP = UDP + ADP. It functions in the pathway pyrimidine metabolism; CTP biosynthesis via de novo pathway; UDP from UMP (UMPK route): step 1/1. Allosterically activated by GTP. Inhibited by UTP. Catalyzes the reversible phosphorylation of UMP to UDP. In Caldicellulosiruptor saccharolyticus (strain ATCC 43494 / DSM 8903 / Tp8T 6331), this protein is Uridylate kinase.